The sequence spans 111 residues: Probable 4-amino-4-deoxy-L-arabinose-phosphoundecaprenol flippase subunit ArnE (111 aa).

3 helical membrane passes run 37-57 (LIWLGLSVIFLAGGMLLWLKL), 65-85 (QAYPFLSINLILVTLSGHFFF), and 91-111 (LQHWLGIGIMMVGILLLGQGI).

This sequence belongs to the ArnE family. In terms of assembly, heterodimer of ArnE and ArnF.

Its subcellular location is the cell inner membrane. It participates in bacterial outer membrane biogenesis; lipopolysaccharide biosynthesis. Functionally, translocates 4-amino-4-deoxy-L-arabinose-phosphoundecaprenol (alpha-L-Ara4N-phosphoundecaprenol) from the cytoplasmic to the periplasmic side of the inner membrane. This is Probable 4-amino-4-deoxy-L-arabinose-phosphoundecaprenol flippase subunit ArnE from Hamiltonella defensa subsp. Acyrthosiphon pisum (strain 5AT).